The primary structure comprises 751 residues: Semaphorin-3C (751 aa).

The N-terminal stretch at 1-21 (MAFRTICVLVGVFICSICVKG) is a signal peptide. Residues 28–511 (RVYLTFDELR…SNEGVSQVSL (484 aa)) form the Sema domain. N-linked (GlcNAc...) asparagine glycosylation occurs at asparagine 81. Cysteine 101 and cysteine 112 are disulfide-bonded. Asparagine 123 is a glycosylation site (N-linked (GlcNAc...) asparagine). Cysteine 130 and cysteine 139 form a disulfide bridge. 2 N-linked (GlcNAc...) asparagine glycosylation sites follow: asparagine 252 and asparagine 268. 2 disulfides stabilise this stretch: cysteine 266–cysteine 378 and cysteine 290–cysteine 338. The N-linked (GlcNAc...) asparagine glycan is linked to asparagine 465. The cysteines at positions 514 and 532 are disulfide-linked. The Ig-like C2-type domain maps to 571-655 (AYRNAAEIVQ…TENSFKQTIA (85 aa)). N-linked (GlcNAc...) asparagine glycosylation is found at asparagine 585 and asparagine 586. Cysteine 592 and cysteine 643 are joined by a disulfide. Residues 712–731 (TRQQHQQGDESQKMRGDYGK) are compositionally biased toward basic and acidic residues. Residues 712 to 751 (TRQQHQQGDESQKMRGDYGKLKALINSRKSRNRRNQLPES) form a disordered region.

This sequence belongs to the semaphorin family. In terms of assembly, interacts with PLXND1.

It localises to the secreted. In terms of biological role, binds to plexin family members and plays an important role in the regulation of developmental processes. Required for normal cardiovascular development during embryogenesis. Functions as attractant for growing axons, and thereby plays an important role in axon growth and axon guidance. In Pongo abelii (Sumatran orangutan), this protein is Semaphorin-3C (SEMA3C).